The primary structure comprises 881 residues: NACHT, LRR and PYD domains-containing protein 6 (881 aa).

A Pyrin domain is found at 1–129 (MDAAGASCSS…EHVLRQHAKV (129 aa)). Serine 104 bears the Phosphoserine mark. Positions 154-175 (AGEDELLGTSGEPEPERARRSD) are disordered. Positions 194–510 (LTVVLQGPAG…EFLAALSYLL (317 aa)) constitute an NACHT domain. 200-207 (GPAGIGKT) lines the ATP pocket. The LRR 1 repeat unit spans residues 459–484 (EKDLERLKLQGSQVQTMFLSKKELPG). The segment at 579–611 (QSQPKVATVGAEKKDELKDEEAEEEEEEEEEEE) is disordered. Over residues 596-611 (KDEEAEEEEEEEEEEE) the composition is skewed to acidic residues. 3 LRR repeats span residues 637–660 (LSSL…VLSY), 749–772 (APSL…LLSQ), and 839–863 (TLSL…TLKP).

It belongs to the NLRP family. Homomultimer; forms the NLRP6 inflammasome polymeric complex, a filament composed of homopolymers in response to pathogens and other damage-associated signals. The core of NLRP6 inflammasomes consists of a signal sensor component (NLRP6), an adapter (PYCARD/ASC), which recruits effector pro-inflammatory caspases (CASP1 and CASP4). Interacts (via pyrin domain) with PYCARD/ASC (via pyrin domain); interaction takes place following NLRP6 activation and formation of liquid-liquid phase separation (LLPS), initiating nucleation which greatly enhances further addition of soluble PYCARD/ASC molecules to the speck in a prion-like polymerization process. Clustered PYCARD/ASC nucleates the formation of CASP1 (or possibly CASP4) filaments through the interaction of their respective CARD domains, acting as a platform for CASP1 polymerization. CASP1 filament formation increases local enzyme concentration, resulting in trans-autocleavage and activation. Active CASP1 then processes IL1B and IL18 precursors, leading to the release of mature cytokines in the extracellular milieu and inflammatory response. Interacts with DHX15. Polyubiquitinated with 'Lys-63'-linked chains, promoting the interaction with PYCARD/ASC and formation of the NLRP6 inflammasome. Deubiquitination by CYLD decreases the interaction with PYCARD/ASC. In terms of tissue distribution, detected in several tissues. Expressed in renal epithelial cells in medullary thick ascending limb of Henle, as well as in salivary gland apical epithelium (at protein level). Isoform 1 is widely expressed. Isoform 2 is primarily expressed in kidney (at protein level).

The protein resides in the cytoplasm. It localises to the inflammasome. It is found in the cell membrane. The protein localises to the nucleus membrane. Functionally, acts as the sensor component of the NLRP6 inflammasome, which mediates inflammasome activation in response to various pathogen-associated signals, leading to maturation and secretion of IL1B and IL18. Inflammasomes are supramolecular complexes that assemble in the cytosol in response to pathogens and other damage-associated signals and play critical roles in innate immunity and inflammation. Acts as a recognition receptor (PRR): recognizes and binds specific pathogens and other damage-associated signals, such as lipoteichoic acid (LTA), a cell-wall component of Gram-positive bacteria, or double stranded RNA (dsRNA). May also recognize and bind lipopolysaccharide (LPS), a major component of the outer membrane of Gram-negative bacteria; however, LPS is probably not a major activator of the NLRP6 inflammasome. Following LTA- or dsRNA-binding, NLRP6 undergoes liquid-liquid phase separation (LLPS), enhancing multivalent interactions, an essential step for the formation of the NLRP6 inflammasome polymeric complex. The NLRP6 inflammasome acts by promoting recruitment of effector pro-inflammatory caspases (CASP1 and/or CASP4) that catalyze maturation and secretion of IL1B and IL18 in the extracellular milieu. The NLRP6 inflammasome plays a central role in the maintenance of epithelial integrity and host defense against microbial infections in the intestine. Required to restrict infection against Gram-positive bacteria by recognizing lipoteichoic acid (LTA), leading to recruitment of CASP4 and CASP1, and subsequent maturation and secretion of IL1B and IL18. Involved in intestinal antiviral innate immunity together with DHX15: recognizes and binds viral dsRNA to restrict infection by enteric viruses through the interferon pathway and GSDMD-dependent release of IL18. Required to prevent infection by the apicomplexan parasite Cryptosporidium in enterocytes by promoting GSDMD-dependent release of IL18. The NLRP6 inflammasome may also regulate the gut microbiota composition by acting as a sensor of microbiota-associated metabolites to form a PYCARD/ASC-dependent inflammasome for downstream IL18 release and secretion of antimicrobial peptides. Essential for gut mucosal self-renewal and proliferation. Regulate mucus secretion in an inflammasome- and autophagy-dependent manner to prevent invasion by enteric bacteria,. During systemic bacterial infections, the NLRP6 inflammasome negatively regulates neutrophil recruitment and neutrophil extracellular traps (NETs) formation. May promote peripheral nerve recovery following injury via an inflammasome-independent mechanism. The sequence is that of NACHT, LRR and PYD domains-containing protein 6 from Rattus norvegicus (Rat).